Reading from the N-terminus, the 187-residue chain is Ribose 1,5-bisphosphate phosphokinase PhnN (187 aa).

ATP is bound at residue 10–17 (GPSGSGKD).

Belongs to the ribose 1,5-bisphosphokinase family.

It catalyses the reaction alpha-D-ribose 1,5-bisphosphate + ATP = 5-phospho-alpha-D-ribose 1-diphosphate + ADP. It participates in metabolic intermediate biosynthesis; 5-phospho-alpha-D-ribose 1-diphosphate biosynthesis; 5-phospho-alpha-D-ribose 1-diphosphate from D-ribose 5-phosphate (route II): step 3/3. In terms of biological role, catalyzes the phosphorylation of ribose 1,5-bisphosphate to 5-phospho-D-ribosyl alpha-1-diphosphate (PRPP). This is Ribose 1,5-bisphosphate phosphokinase PhnN from Klebsiella pneumoniae subsp. pneumoniae (strain ATCC 700721 / MGH 78578).